The primary structure comprises 578 residues: Phosphatase DCR2 (578 aa).

Residue 116–123 (GRRWFGKS) participates in ATP binding.

It is found in the cytoplasm. In terms of biological role, required for cell cycle progression. Has a role in the completion of START. The sequence is that of Phosphatase DCR2 (DCR2) from Saccharomyces cerevisiae (strain ATCC 204508 / S288c) (Baker's yeast).